The chain runs to 384 residues: Chaperone protein DnaJ (384 aa).

One can recognise a J domain in the interval Asp5 to Gly70. The segment at Gly138–Thr216 adopts a CR-type zinc-finger fold. Zn(2+)-binding residues include Cys151, Cys154, Cys168, Cys171, Cys190, Cys193, Cys204, and Cys207. CXXCXGXG motif repeat units lie at residues Cys151–Gly158, Cys168–Gly175, Cys190–Gly197, and Cys204–Gly211.

Belongs to the DnaJ family. Homodimer. Zn(2+) serves as cofactor.

It localises to the cytoplasm. Its function is as follows. Participates actively in the response to hyperosmotic and heat shock by preventing the aggregation of stress-denatured proteins and by disaggregating proteins, also in an autonomous, DnaK-independent fashion. Unfolded proteins bind initially to DnaJ; upon interaction with the DnaJ-bound protein, DnaK hydrolyzes its bound ATP, resulting in the formation of a stable complex. GrpE releases ADP from DnaK; ATP binding to DnaK triggers the release of the substrate protein, thus completing the reaction cycle. Several rounds of ATP-dependent interactions between DnaJ, DnaK and GrpE are required for fully efficient folding. Also involved, together with DnaK and GrpE, in the DNA replication of plasmids through activation of initiation proteins. The chain is Chaperone protein DnaJ from Idiomarina loihiensis (strain ATCC BAA-735 / DSM 15497 / L2-TR).